Consider the following 130-residue polypeptide: Large ribosomal subunit protein bL19 (130 aa).

The protein belongs to the bacterial ribosomal protein bL19 family.

Its function is as follows. This protein is located at the 30S-50S ribosomal subunit interface and may play a role in the structure and function of the aminoacyl-tRNA binding site. This Parvibaculum lavamentivorans (strain DS-1 / DSM 13023 / NCIMB 13966) protein is Large ribosomal subunit protein bL19.